A 353-amino-acid polypeptide reads, in one-letter code: UPF0283 membrane protein YcjF (353 aa).

The span at 1-19 (MSEPLKPRIDFAEPLKEEP) shows a compositional bias: basic and acidic residues. Residues 1 to 35 (MSEPLKPRIDFAEPLKEEPTSAFKAQQTFSEAESR) are disordered. 3 helical membrane-spanning segments follow: residues 70–90 (MVMG…VQWT), 100–120 (VALG…GSVV), and 213–233 (ESTL…FIAW).

This sequence belongs to the UPF0283 family.

The protein localises to the cell inner membrane. The sequence is that of UPF0283 membrane protein YcjF from Salmonella gallinarum (strain 287/91 / NCTC 13346).